Reading from the N-terminus, the 1040-residue chain is MGTHARKKASLLLLVLATVALVSSPGWSFAQGTPATFGPIFEEQPIGLLFPEESAEDQVTLACRARASPPATYRWKMNGTDMNLEPGSRHQLMGGNLVIMSPTKTQDAGVYQCLASNPVGTVVSKEAVLRFGFLQEFSKEERDPVKTHEGWGVMLPCNPPAHYPGLSYRWLLNEFPNFIPTDGRHFVSQTTGNLYIARTNASDLGNYSCLATSHMDFSTKSVFSKFAQLNLAAEDPRLFAPSIKARFPPETYALVGQQVTLECFAFGNPVPRIKWRKVDGSLSPQWATAEPTLQIPSVSFEDEGTYECEAENSKGRDTVQGRIIVQAQPEWLKVISDTEADIGSNLRWGCAAAGKPRPMVRWLRNGEPLASQNRVEVLAGDLRFSKLSLEDSGMYQCVAENKHGTIYASAELAVQALAPDFRQNPVRRLIPAARGGEISILCQPRAAPKATILWSKGTEILGNSTRVTVTSDGTLIIRNISRSDEGKYTCFAENFMGKANSTGILSVRDATKITLAPSSADINVGDNLTLQCHASHDPTMDLTFTWTLDDFPIDFDKPGGHYRRASAKETIGDLTILNAHVRHGGKYTCMAQTVVDGTSKEATVLVRGPPGPPGGVVVRDIGDTTVQLSWSRGFDNHSPIAKYTLQARTPPSGKWKQVRTNPVNIEGNAETAQVLGLMPWMDYEFRVSASNILGTGEPSGPSSKIRTKEAVPSVAPSGLSGGGGAPGELIINWTPVSREYQNGDGFGYLLSFRRQGSSSWQTARVPGADAQYFVYGNDSIQPYTPFEVKIRSYNRRGDGPESLTALVYSAEEEPRVAPAKVWAKGSSSSEMNVSWEPVLQDMNGILLGYEIRYWKAGDNEAAADRVRTAGLDTSARVTGLNPNTKYHVTVRAYNRAGTGPASPSADAMTVKPPPRRPPGNISWTFSSSSLSLKWDPVVPLRNESTVTGYKMLYQNDLHPTPTLHLTSKNWIEIPVPEDIGHALVQIRTTGPGGDGIPAEVHIVRNGGTSMMVESAAARPAHPGPAFSCMVILMLAGYQKL.

The first 30 residues, 1–30 (MGTHARKKASLLLLVLATVALVSSPGWSFA), serve as a signal peptide directing secretion. 6 Ig-like C2-type domains span residues 39-130 (PIFE…AVLR), 135-224 (QEFS…SVFS), 241-324 (PSIK…GRII), 329-413 (PEWL…AELA), 419-506 (PDFR…GILS), and 511-605 (TKIT…ATVL). 4 disulfide bridges follow: Cys63–Cys113, Cys157–Cys209, Cys263–Cys308, and Cys350–Cys397. N-linked (GlcNAc...) asparagine glycans are attached at residues Asn78, Asn200, and Asn206. Residues Asn463, Asn479, Asn500, and Asn527 are each glycosylated (N-linked (GlcNAc...) asparagine). Fibronectin type-III domains follow at residues 612–710 (PPGG…TKEA), 715–812 (APSG…SAEE), 817–913 (APAK…VKPP), and 917–1008 (PPGN…NGGT). An N-linked (GlcNAc...) asparagine glycan is attached at Asn777. The Cell attachment site motif lies at 796–798 (RGD). Residues Asn832, Asn920, and Asn942 are each glycosylated (N-linked (GlcNAc...) asparagine). Residues 895–921 (RAGTGPASPSADAMTVKPPPRRPPGNI) are disordered. The GPI-anchor amidated alanine moiety is linked to residue Ala1015. Residues 1016–1040 (AARPAHPGPAFSCMVILMLAGYQKL) constitute a propeptide, removed in mature form.

The protein belongs to the immunoglobulin superfamily. Contactin family. In neural tissues in embryos, and in adult brain, spinal cord and cerebellum.

It localises to the cell membrane. Functionally, may play a role in the initial growth and guidance of axons. May be involved in cell adhesion. In conjunction with another transmembrane protein, CNTNAP2, contributes to the organization of axonal domains at nodes of Ranvier by maintaining voltage-gated potassium channels at the juxtaparanodal region. The protein is Contactin-2 (Cntn2) of Rattus norvegicus (Rat).